Reading from the N-terminus, the 397-residue chain is 1-carboxy-3-chloro-3,4-dihydroxycyclo hexa-1,5-diene dehydrogenase (397 aa).

To P.putida PHT4.

This Comamonas testosteroni (Pseudomonas testosteroni) protein is 1-carboxy-3-chloro-3,4-dihydroxycyclo hexa-1,5-diene dehydrogenase (cbaC).